Here is a 209-residue protein sequence, read N- to C-terminus: Mitotic spindle checkpoint protein MAD2 (209 aa).

The 184-residue stretch at 15–198 folds into the HORMA domain; sequence HGSAAIVSEF…TKIHKVDTLV (184 aa).

It belongs to the MAD2 family. In terms of assembly, part of the mitotic checkpoint complex (MCC); interacts with MAD1, CDC20-1, CDC20-2 and CDC20-5. Interacts with BUBR1 at chromocenters and with BUB3.1. Interacts with EIF4B3. Expressed in actively dividing tissues, early in organ development, in young leaves, lateral root primordia and root meristems.

It localises to the nucleus. It is found in the nucleus envelope. Its subcellular location is the chromosome. The protein resides in the centromere. The protein localises to the kinetochore. It localises to the cytoplasm. It is found in the cytoskeleton. Its subcellular location is the spindle. Its function is as follows. Required for the execution of the mitotic checkpoint which monitors the process of kinetochore-spindle attachment and delays the onset of anaphase when this process is not complete. It inhibits the activity of the anaphase promoting complex by sequestering CDC20 until all chromosomes are aligned at the metaphase plate. In Arabidopsis thaliana (Mouse-ear cress), this protein is Mitotic spindle checkpoint protein MAD2.